The following is a 460-amino-acid chain: Nitrilase and fragile histidine triad fusion protein NitFhit (460 aa).

The CN hydrolase domain maps to 33-279 (ATIAVGQMRS…LDIGTAEVDL (247 aa)). Catalysis depends on residues E72, K142, and C183. The 108-residue stretch at 315 to 422 (DRPFATNIVD…MPRRLGDFGH (108 aa)) folds into the HIT domain. Positions 407–411 (HVHFH) match the Histidine triad motif motif. The Tele-AMP-histidine intermediate role is filled by H409.

The protein in the N-terminal section; belongs to the UPF0012 family. In terms of assembly, homotetramer. Mn(2+) serves as cofactor.

It catalyses the reaction P(1),P(3)-bis(5'-adenosyl) triphosphate + H2O = AMP + ADP + 2 H(+). Cleaves A-5'-PPP-5'A to yield AMP and ADP. This Drosophila melanogaster (Fruit fly) protein is Nitrilase and fragile histidine triad fusion protein NitFhit.